A 186-amino-acid polypeptide reads, in one-letter code: Peptidoglycan-recognition protein SD (186 aa).

Positions 1–18 (MTWIGLLIVGLTAIAVQG) are cleaved as a signal peptide. The N-acetylmuramoyl-L-alanine amidase domain maps to 47–169 (AVIAHTAGGA…RQVSATMSPG (123 aa)). C57 and C63 are joined by a disulfide. N181 carries N-linked (GlcNAc...) asparagine glycosylation.

Belongs to the N-acetylmuramoyl-L-alanine amidase 2 family.

It localises to the secreted. Peptidoglycan-recognition protein that plays a key role in innate immunity by binding to peptidoglycans (PGN) of Gram-positive bacteria and activating the Toll pathway. Has no activity against on Gram-negative bacteria and fungi. Shows some partial redundancy with PRPGP-SA in Gram-positive bacteria recognition. May act by activating the proteolytic cleavage of Spatzle and the subsequent activation of Toll pathway. Recognizes S.aureus PGN. In Drosophila simulans (Fruit fly), this protein is Peptidoglycan-recognition protein SD (PGRP-SD).